We begin with the raw amino-acid sequence, 160 residues long: Major pollen allergen Bet v 1-E (160 aa).

Residues lysine 55, tyrosine 82, tyrosine 84, and asparagine 101 each coordinate brassinolide.

The protein belongs to the BetVI family.

It is found in the cytoplasm. May be a general steroid carrier protein. In Betula pendula (European white birch), this protein is Major pollen allergen Bet v 1-E (BETV1E).